Reading from the N-terminus, the 334-residue chain is Petrobactin import system permease protein FatD (334 aa).

9 consecutive transmembrane segments (helical) span residues 24 to 44 (FIIA…TGVY), 64 to 84 (TVAL…MQLI), 98 to 118 (IEWS…PTLV), 119 to 139 (QRMT…FLFL), 152 to 172 (IIGL…GLLF), 197 to 217 (LWLI…LTLA), 234 to 254 (IVLF…AVIG), 277 to 297 (SNLP…DIIS), and 304 to 324 (FELP…ITIL).

Belongs to the binding-protein-dependent transport system permease family. FecCD subfamily. The complex is composed of two ATP-binding proteins (FatE), two transmembrane proteins (FatC and FatD) and a solute-binding protein (FpuA).

It localises to the cell membrane. Part of an ABC transporter complex involved in ferric-petrobactin uptake. Probably responsible for the translocation of the substrate across the membrane. In Bacillus anthracis, this protein is Petrobactin import system permease protein FatD.